The primary structure comprises 67 residues: DNA-directed RNA polymerase subunit omega (67 aa).

The protein belongs to the RNA polymerase subunit omega family. The RNAP catalytic core consists of 2 alpha, 1 beta, 1 beta' and 1 omega subunit. When a sigma factor is associated with the core the holoenzyme is formed, which can initiate transcription.

The catalysed reaction is RNA(n) + a ribonucleoside 5'-triphosphate = RNA(n+1) + diphosphate. Its function is as follows. Promotes RNA polymerase assembly. Latches the N- and C-terminal regions of the beta' subunit thereby facilitating its interaction with the beta and alpha subunits. The sequence is that of DNA-directed RNA polymerase subunit omega from Paraburkholderia phymatum (strain DSM 17167 / CIP 108236 / LMG 21445 / STM815) (Burkholderia phymatum).